A 275-amino-acid chain; its full sequence is Release factor glutamine methyltransferase (275 aa).

Residues 114-118, Asp-137, Trp-165, and Asn-180 each bind S-adenosyl-L-methionine; that span reads GTGSG. 180 to 183 contributes to the substrate binding site; that stretch reads NPPY.

The protein belongs to the protein N5-glutamine methyltransferase family. PrmC subfamily.

The enzyme catalyses L-glutaminyl-[peptide chain release factor] + S-adenosyl-L-methionine = N(5)-methyl-L-glutaminyl-[peptide chain release factor] + S-adenosyl-L-homocysteine + H(+). Its function is as follows. Methylates the class 1 translation termination release factors RF1/PrfA and RF2/PrfB on the glutamine residue of the universally conserved GGQ motif. This Xylella fastidiosa (strain Temecula1 / ATCC 700964) protein is Release factor glutamine methyltransferase.